Consider the following 61-residue polypeptide: UPF0434 protein Pfl01_4174 (61 aa).

This sequence belongs to the UPF0434 family.

The chain is UPF0434 protein Pfl01_4174 from Pseudomonas fluorescens (strain Pf0-1).